A 175-amino-acid chain; its full sequence is Adenine phosphoribosyltransferase (175 aa).

The protein belongs to the purine/pyrimidine phosphoribosyltransferase family. Homodimer.

The protein localises to the cytoplasm. The catalysed reaction is AMP + diphosphate = 5-phospho-alpha-D-ribose 1-diphosphate + adenine. It participates in purine metabolism; AMP biosynthesis via salvage pathway; AMP from adenine: step 1/1. Its function is as follows. Catalyzes a salvage reaction resulting in the formation of AMP, that is energically less costly than de novo synthesis. The protein is Adenine phosphoribosyltransferase of Francisella tularensis subsp. tularensis (strain WY96-3418).